Reading from the N-terminus, the 152-residue chain is Deoxyuridine 5'-triphosphate nucleotidohydrolase (152 aa).

Substrate is bound by residues Arg-63–Gly-65, Asn-76, and Thr-80–Asp-82. Positions Leu-129–Gly-152 are disordered.

Belongs to the dUTPase family. Mg(2+) serves as cofactor.

The enzyme catalyses dUTP + H2O = dUMP + diphosphate + H(+). It functions in the pathway pyrimidine metabolism; dUMP biosynthesis; dUMP from dCTP (dUTP route): step 2/2. Functionally, this enzyme is involved in nucleotide metabolism: it produces dUMP, the immediate precursor of thymidine nucleotides and it decreases the intracellular concentration of dUTP so that uracil cannot be incorporated into DNA. The protein is Deoxyuridine 5'-triphosphate nucleotidohydrolase of Cutibacterium acnes (strain DSM 16379 / KPA171202) (Propionibacterium acnes).